We begin with the raw amino-acid sequence, 312 residues long: Short-chain dehydrogenase/reductase pkfC (312 aa).

The NADP(+) site is built by Lys-56, Asn-108, and Lys-140. Catalysis depends on Ser-164, which acts as the Proton donor. NADP(+) is bound by residues Tyr-193 and Lys-197. Tyr-193 functions as the Proton acceptor in the catalytic mechanism. Lys-197 (lowers pKa of active site Tyr) is an active-site residue.

It belongs to the short-chain dehydrogenases/reductases (SDR) family.

The protein operates within secondary metabolite biosynthesis. In terms of biological role, short-chain dehydrogenase/reductase; part of the gene cluster that mediates the biosynthesis of aspernidine A, a prenylated isoindolinone. The starting point of the biosynthesis of aspernidin A is the production of orsellinaldehyde by the non-reducing polyketide synthase pkfA. Hydroxylation, methylation of one of the phenol groups, and prenylation, presumably catalyzed by the prenyltransferase pkfE, would be needed to yield aspernidine D. Subsequently, the cytochrome P450 monooxygenase pkfB is responsible for hydroxylation of aspernidine D to yield aspernidine E. The dehydrogenase pkfF may be responsible for further oxidation of aspernidine E to form a dialdehyde intermediate which is further transformed in a series of steps, some of which are enzyme-mediated, to generate aspernidine A. The possibility that additional enzymes outside of the cluster are involved in aspernidine A biosynthesis cannot be excluded. This chain is Short-chain dehydrogenase/reductase pkfC, found in Emericella nidulans (strain FGSC A4 / ATCC 38163 / CBS 112.46 / NRRL 194 / M139) (Aspergillus nidulans).